A 463-amino-acid polypeptide reads, in one-letter code: Argininosuccinate lyase (463 aa).

Belongs to the lyase 1 family. Argininosuccinate lyase subfamily.

The protein resides in the cytoplasm. The catalysed reaction is 2-(N(omega)-L-arginino)succinate = fumarate + L-arginine. It participates in amino-acid biosynthesis; L-arginine biosynthesis; L-arginine from L-ornithine and carbamoyl phosphate: step 3/3. The chain is Argininosuccinate lyase from Ruegeria pomeroyi (strain ATCC 700808 / DSM 15171 / DSS-3) (Silicibacter pomeroyi).